The following is a 315-amino-acid chain: Transposase for insertion sequence element IS640 (315 aa).

In terms of domain architecture, HTH IS21-type spans 5 to 66; sequence EDFYMIKQMR…PFMDYIDMRL (62 aa). The Integrase catalytic domain maps to 111 to 285; the sequence is FETQPGYQLQ…TPEQRSRWSR (175 aa).

The protein belongs to the transposase IS21/IS408/IS1162 family.

Its function is as follows. Involved in the transposition of the insertion sequence. The polypeptide is Transposase for insertion sequence element IS640 (istA) (Shigella sonnei).